Reading from the N-terminus, the 138-residue chain is MANLPDKDKLLRNFSRCGNWEEKYLYIIELGGQLPPLSAEMRTPDNRIAGCQSQVWIVLSTQADGSVQLYGDSDAAIVKGLIAMVFILYQGLTLAEIVAYDVRPFFDALALTQHLTPSRSQGLEAMVRGIRAQVAARQ.

The active-site Cysteine persulfide intermediate is C51.

Belongs to the SufE family. As to quaternary structure, homodimer. Interacts with SufS.

It localises to the cytoplasm. The protein operates within cofactor biosynthesis; iron-sulfur cluster biosynthesis. Participates in cysteine desulfuration mediated by SufS. Cysteine desulfuration mobilizes sulfur from L-cysteine to yield L-alanine and constitutes an essential step in sulfur metabolism for biosynthesis of a variety of sulfur-containing biomolecules. Functions as a sulfur acceptor for SufS, by mediating the direct transfer of the sulfur atom from the S-sulfanylcysteine of SufS, an intermediate product of cysteine desulfuration process. The polypeptide is Cysteine desulfuration protein SufE (Sodalis glossinidius (strain morsitans)).